A 641-amino-acid chain; its full sequence is Phosphomethylpyrimidine synthase (641 aa).

Residues N221, M250, Y279, H315, 335–337 (SRG), 376–379 (DGLR), and E415 each bind substrate. Residue H419 participates in Zn(2+) binding. Y442 provides a ligand contact to substrate. H483 lines the Zn(2+) pocket. C563, C566, and C571 together coordinate [4Fe-4S] cluster.

Belongs to the ThiC family. In terms of assembly, homodimer. [4Fe-4S] cluster serves as cofactor.

The catalysed reaction is 5-amino-1-(5-phospho-beta-D-ribosyl)imidazole + S-adenosyl-L-methionine = 4-amino-2-methyl-5-(phosphooxymethyl)pyrimidine + CO + 5'-deoxyadenosine + formate + L-methionine + 3 H(+). It participates in cofactor biosynthesis; thiamine diphosphate biosynthesis. Catalyzes the synthesis of the hydroxymethylpyrimidine phosphate (HMP-P) moiety of thiamine from aminoimidazole ribotide (AIR) in a radical S-adenosyl-L-methionine (SAM)-dependent reaction. This Rhodopseudomonas palustris (strain TIE-1) protein is Phosphomethylpyrimidine synthase.